The following is a 280-amino-acid chain: Putative pyruvate, phosphate dikinase regulatory protein 1 (280 aa).

G152–T159 contributes to the ADP binding site.

This sequence belongs to the pyruvate, phosphate/water dikinase regulatory protein family. PDRP subfamily.

It catalyses the reaction N(tele)-phospho-L-histidyl/L-threonyl-[pyruvate, phosphate dikinase] + ADP = N(tele)-phospho-L-histidyl/O-phospho-L-threonyl-[pyruvate, phosphate dikinase] + AMP + H(+). It carries out the reaction N(tele)-phospho-L-histidyl/O-phospho-L-threonyl-[pyruvate, phosphate dikinase] + phosphate + H(+) = N(tele)-phospho-L-histidyl/L-threonyl-[pyruvate, phosphate dikinase] + diphosphate. Its function is as follows. Bifunctional serine/threonine kinase and phosphorylase involved in the regulation of the pyruvate, phosphate dikinase (PPDK) by catalyzing its phosphorylation/dephosphorylation. This is Putative pyruvate, phosphate dikinase regulatory protein 1 from Latilactobacillus sakei subsp. sakei (strain 23K) (Lactobacillus sakei subsp. sakei).